A 1029-amino-acid chain; its full sequence is Protein phosphatase 1 regulatory subunit 12A (1029 aa).

Positions 35–38 (KVKF) match the KVKF motif motif. ANK repeat units follow at residues 39–68 (DDGA…DINY), 72–101 (DGLT…NINQ), 105–134 (EGWI…HVGA), 138–164 (EGDT…RQGV), 198–227 (SGGT…DVNI), and 231–260 (DGWT…DMET). (3S)-3-hydroxyasparagine; by HIF1AN is present on residues Asn-67 and Asn-100. The residue at position 226 (Asn-226) is a (3S)-3-hydroxyasparagine; by HIF1AN. Residues 290-786 (LHSEKRDKKS…APSSSSLSTL (497 aa)) form a disordered region. Over residues 291 to 300 (HSEKRDKKSP) the composition is skewed to basic and acidic residues. Ser-299 carries the phosphoserine modification. Polar residues predominate over residues 302-314 (IESTANMENNQPQ). The segment covering 318–353 (KNKETLIIEPEKNASRIESLEHEKADEEEEGKKDES) has biased composition (basic and acidic residues). Over residues 357-369 (SEEDEEDDSESEA) the composition is skewed to acidic residues. A compositionally biased stretch (low complexity) spans 385–402 (TSSTQAAPAAVTAPTLSS). Ser-422 and Ser-432 each carry phosphoserine. Residues 422–432 (SPKEEERKDES) are compositionally biased toward basic and acidic residues. A Phosphothreonine modification is found at Thr-443. The residue at position 445 (Ser-445) is a Phosphoserine; by NUAK1. Residue Tyr-446 is modified to Phosphotyrosine. Residues 469-480 (RSASSPRLSSSL) are compositionally biased toward low complexity. Ser-472 bears the Phosphoserine; by NUAK1 mark. Residue Ser-473 is modified to Phosphoserine; by CDK1. Phosphoserine is present on Ser-477. Basic and acidic residues predominate over residues 481–491 (DNKEKEKDNKG). Phosphoserine occurs at positions 507 and 509. Residues 540–551 (NSSINEGSTYHR) are compositionally biased toward polar residues. Over residues 564–578 (SCSVPSTTSTPTVTS) the composition is skewed to low complexity. The span at 585-594 (SLPSSTSTAA) shows a compositional bias: polar residues. A compositionally biased stretch (low complexity) spans 596–610 (TPPGSSSAGTQSSTS). Residues Ser-601 and Ser-618 each carry the phosphoserine modification. The span at 614–625 (WAEDSTEKEKDS) shows a compositional bias: basic and acidic residues. The segment covering 626–656 (APTAVTIPVAPTVVNAAAPSTTTLTTTTAGT) has biased composition (low complexity). The span at 671-680 (VRDEESESQR) shows a compositional bias: basic and acidic residues. Residues 680 to 863 (RKARSRQARQ…VSFWTQDSDE (184 aa)) are interaction with ROCK2. A compositionally biased stretch (basic residues) spans 681 to 691 (KARSRQARQSR). Phosphoserine; by PKA and PKG; in vitro occurs at positions 690 and 693. Residue Thr-694 is modified to Phosphothreonine; by ROCK1, ROCK2, CDC42BP, ZIPK/DAPK3 and RAF1. A compositionally biased stretch (basic and acidic residues) spans 716–765 (RTREQENEEKEKEEKEKQDKEKQEEKKESEASREDEYKQKYSRTYDETYT). Positions 771–786 (STSSSSAPSSSSLSTL) are enriched in low complexity. Ser-801 carries the post-translational modification Phosphoserine. The tract at residues 808 to 927 (AYSRGLAKEN…PYSSRLEKDD (120 aa)) is disordered. A compositionally biased stretch (basic and acidic residues) spans 813-839 (LAKENEREGEKKEEEKEGEDKSQPKSI). Positions 840-851 (RERRRPREKRRS) are enriched in basic residues. Residue Ser-851 is modified to Phosphoserine; by ROCK2. Phosphoserine is present on residues Ser-861 and Ser-870. The segment covering 866-882 (QERQSDTEDGSSKRETQ) has biased composition (basic and acidic residues). Residues 883–897 (TDSVSRYDSSSTSSS) are compositionally biased toward low complexity. Ser-902 and Ser-907 each carry phosphoserine. Ser-909 bears the Phosphoserine; by NUAK1 mark. The span at 913 to 927 (LEDRKPYSSRLEKDD) shows a compositional bias: basic and acidic residues. Ser-994 is subject to Phosphoserine.

As to quaternary structure, PP1 comprises a catalytic subunit, PPP1CA, PPP1CB or PPP1CC, and one or several targeting or regulatory subunits. PPP1R12A mediates binding to myosin. Interacts with ARHA and CIT. Binds PPP1R12B, ROCK1 and IL16. Interacts directly with PRKG1. Non-covalent dimer of 2 dimers; PRKG1-PRKG1 and PPP1R12A-PPP1R12A. Interacts with SMTNL1. Interacts with PPP1CB; the interaction is direct. Interacts (when phosphorylated at Ser-445, Ser-472 and Ser-910) with 14-3-3. Interacts with ROCK1 and ROCK2. Interacts with isoform 1 and isoform 2 of ZIPK/DAPK3. Interacts with RAF1. Interacts with HIF1AN. Interacts with NCKAP1L. In terms of processing, phosphorylated by CIT (Rho-associated kinase). Phosphorylated cooperatively by ROCK1 and CDC42BP on Thr-694. Phosphorylated on upon DNA damage, probably by ATM or ATR. In vitro, phosphorylation of Ser-693 by PKA and PKG appears to prevent phosphorylation of the inhibitory site Thr-694, probably mediated by PRKG1. Phosphorylation at Ser-445, Ser-472 and Ser-909 by NUAK1 promotes interaction with 14-3-3, leading to inhibit interaction with myosin light chain MLC2, preventing dephosphorylation of MLC2. May be phosphorylated at Thr-694 by DMPK; may inhibit the myosin phosphatase activity. Phosphorylated at Ser-473 by CDK1 during mitosis, creating docking sites for the POLO box domains of PLK1. Subsequently, PLK1 binds and phosphorylates PPP1R12A. As to expression, expressed in striated and vascular smooth muscle, specificcally in type 2a fibers (at protein level). Expression levels are 20-30% higher in developed males than females (at protein level).

It is found in the cytoplasm. It localises to the cytoskeleton. The protein localises to the stress fiber. Its function is as follows. Key regulator of protein phosphatase 1C (PPP1C). Mediates binding to myosin. As part of the PPP1C complex, involved in dephosphorylation of PLK1. Capable of inhibiting HIF1AN-dependent suppression of HIF1A activity. The chain is Protein phosphatase 1 regulatory subunit 12A from Mus musculus (Mouse).